A 1490-amino-acid polypeptide reads, in one-letter code: Leucine-rich repeat-containing protein 7 (1490 aa).

LRR repeat units follow at residues I23–F44, T47–C68, A70–L91, N93–C114, C116–L137, N139–V161, K162–L183, Q185–I206, N208–L229, M231–E253, A254–L275, K277–L298, L300–L321, S323–C344, N346–M367, R369–K391, and E392–A413. S439, S441, and S443 each carry phosphoserine. Positions K663–H676 are enriched in basic and acidic residues. 3 disordered regions span residues K663–M704, A785–R807, and E822–P899. Residues C677–T686 show a composition bias toward polar residues. Low complexity predominate over residues Y687–S700. T831 carries the phosphothreonine modification. S850 is modified (phosphoserine). Residues P859–L871 show a composition bias toward low complexity. The residue at position 865 (T865) is a Phosphothreonine. S869 is modified (phosphoserine). A compositionally biased stretch (basic and acidic residues) spans P872–T882. Residues S947, S949, and S1118 each carry the phosphoserine modification. The segment covering P1134–G1144 has biased composition (basic and acidic residues). Disordered regions lie at residues P1134 to I1158 and Q1196 to V1218. Position 1149 is an omega-N-methylarginine (R1149). The segment covering Q1196–P1217 has biased composition (polar residues). S1233 is modified (phosphoserine). Disordered regions lie at residues G1238–K1265 and R1282–L1312. The segment covering K1243–C1263 has biased composition (basic and acidic residues). Residues T1286–W1307 show a composition bias toward polar residues. 2 positions are modified to phosphoserine: S1288 and S1392. Residues E1398 to L1488 enclose the PDZ domain.

The protein belongs to the LAP (LRR and PDZ) protein family. Interacts with CNKSR2 and DLG4. Interacts with CTNND2/Catenin delta-2. Forms a complex with N-cadherin through CTNND2. Interacts with CAMK2A. In terms of tissue distribution, expressed in brain (at protein level).

The protein localises to the cytoplasm. The protein resides in the postsynaptic density. Its function is as follows. Required for normal synaptic spine architecture and function. Necessary for DISC1 and GRM5 localization to postsynaptic density complexes and for both N-methyl D-aspartate receptor-dependent and metabotropic glutamate receptor-dependent long term depression. This is Leucine-rich repeat-containing protein 7 (Lrrc7) from Mus musculus (Mouse).